We begin with the raw amino-acid sequence, 199 residues long: N-(5'-phosphoribosyl)anthranilate isomerase (199 aa).

This sequence belongs to the TrpF family.

The enzyme catalyses N-(5-phospho-beta-D-ribosyl)anthranilate = 1-(2-carboxyphenylamino)-1-deoxy-D-ribulose 5-phosphate. It participates in amino-acid biosynthesis; L-tryptophan biosynthesis; L-tryptophan from chorismate: step 3/5. This Solibacter usitatus (strain Ellin6076) protein is N-(5'-phosphoribosyl)anthranilate isomerase.